The primary structure comprises 182 residues: Probable RNA 2'-phosphotransferase (182 aa).

The protein belongs to the KptA/TPT1 family.

Its function is as follows. Removes the 2'-phosphate from RNA via an intermediate in which the phosphate is ADP-ribosylated by NAD followed by a presumed transesterification to release the RNA and generate ADP-ribose 1''-2''-cyclic phosphate (APPR&gt;P). May function as an ADP-ribosylase. The polypeptide is Probable RNA 2'-phosphotransferase (Acetivibrio thermocellus (strain ATCC 27405 / DSM 1237 / JCM 9322 / NBRC 103400 / NCIMB 10682 / NRRL B-4536 / VPI 7372) (Clostridium thermocellum)).